The sequence spans 135 residues: Translation initiation factor 2 subunit beta (135 aa).

It belongs to the eIF-2-beta/eIF-5 family. As to quaternary structure, heterotrimer composed of an alpha, a beta and a gamma chain.

In terms of biological role, eIF-2 functions in the early steps of protein synthesis by forming a ternary complex with GTP and initiator tRNA. The protein is Translation initiation factor 2 subunit beta of Methanobrevibacter smithii (strain ATCC 35061 / DSM 861 / OCM 144 / PS).